The following is a 213-amino-acid chain: Large ribosomal subunit protein uL1 (213 aa).

The protein belongs to the universal ribosomal protein uL1 family. Part of the 50S ribosomal subunit.

Functionally, binds directly to 23S rRNA. Probably involved in E site tRNA release. In terms of biological role, protein L1 is also a translational repressor protein, it controls the translation of its operon by binding to its mRNA. This chain is Large ribosomal subunit protein uL1, found in Methanosarcina barkeri (strain Fusaro / DSM 804).